A 701-amino-acid chain; its full sequence is DNA ligase A (701 aa).

Residues 1–23 form a disordered region; that stretch reads MSEKATGEVEAELPEHPDADERR. NAD(+) contacts are provided by residues 49–53, 99–100, and Glu129; these read DAEFD and SL. Residue Lys131 is the N6-AMP-lysine intermediate of the active site. The NAD(+) site is built by Arg152, Glu192, Lys308, and Lys332. The Zn(2+) site is built by Cys426, Cys429, Cys445, and Cys451. The BRCT domain occupies 615 to 701; that stretch reads SIERTLEGLS…EQGPPVEPAE (87 aa).

It belongs to the NAD-dependent DNA ligase family. LigA subfamily. Mg(2+) serves as cofactor. Requires Mn(2+) as cofactor.

It carries out the reaction NAD(+) + (deoxyribonucleotide)n-3'-hydroxyl + 5'-phospho-(deoxyribonucleotide)m = (deoxyribonucleotide)n+m + AMP + beta-nicotinamide D-nucleotide.. Its function is as follows. DNA ligase that catalyzes the formation of phosphodiester linkages between 5'-phosphoryl and 3'-hydroxyl groups in double-stranded DNA using NAD as a coenzyme and as the energy source for the reaction. It is essential for DNA replication and repair of damaged DNA. Probably the only ligase required for non-homologous end joining (NHEJ) repair of 3-overhangs. The sequence is that of DNA ligase A from Mycolicibacterium smegmatis (strain ATCC 700084 / mc(2)155) (Mycobacterium smegmatis).